A 296-amino-acid polypeptide reads, in one-letter code: MEQFRNIGIIGRLGSSQVLDTVRRLKKFLLARHLHVILEDTIAEVLPGHGLQTSSRKLLGEVCDMVIVVGGDGSLLGAARALARHNIPVLGINRGSLGFLTDIRPDELEVKVAEVLDGHYLVENRFLLQAEVRRHAEAIGQGDALNDVVLHPGKSTRMIEFEIYIDGQFVCSQKADGLIVATPTGSTAYALSAGGPIMHPKLDAIVIVPMYPHTLSGRPIVVDGNSELKIVVSKDMQIYPQVSCDGQNHFTCAPGDTITVSKKAQKLRLIHPLDHNYYEVCRTKLGWGSRLGGGGD.

Asp72 acts as the Proton acceptor in catalysis. Residues 72–73 (DG), 146–147 (ND), Arg157, Lys174, Asp176, 187–192 (TAYALS), and Gln247 each bind NAD(+).

This sequence belongs to the NAD kinase family. A divalent metal cation serves as cofactor.

The protein resides in the cytoplasm. It carries out the reaction NAD(+) + ATP = ADP + NADP(+) + H(+). Functionally, involved in the regulation of the intracellular balance of NAD and NADP, and is a key enzyme in the biosynthesis of NADP. Catalyzes specifically the phosphorylation on 2'-hydroxyl of the adenosine moiety of NAD to yield NADP. In Pseudomonas fluorescens (strain ATCC BAA-477 / NRRL B-23932 / Pf-5), this protein is NAD kinase.